A 431-amino-acid polypeptide reads, in one-letter code: Adenylosuccinate synthetase (431 aa).

GTP-binding positions include 13 to 19 (GDEGKGK) and 41 to 43 (GHT). D14 (proton acceptor) is an active-site residue. Mg(2+)-binding residues include D14 and G41. Residues 14–17 (DEGK), 39–42 (NAGH), T130, R144, Q225, T240, and R304 contribute to the IMP site. H42 functions as the Proton donor in the catalytic mechanism. Substrate is bound at residue 300 to 306 (ATTGRKR). GTP-binding positions include R306, 332-334 (KLD), and 415-417 (STG).

It belongs to the adenylosuccinate synthetase family. Homodimer. Mg(2+) is required as a cofactor.

Its subcellular location is the cytoplasm. It catalyses the reaction IMP + L-aspartate + GTP = N(6)-(1,2-dicarboxyethyl)-AMP + GDP + phosphate + 2 H(+). The protein operates within purine metabolism; AMP biosynthesis via de novo pathway; AMP from IMP: step 1/2. Plays an important role in the de novo pathway of purine nucleotide biosynthesis. Catalyzes the first committed step in the biosynthesis of AMP from IMP. The sequence is that of Adenylosuccinate synthetase from Shewanella woodyi (strain ATCC 51908 / MS32).